The following is a 424-amino-acid chain: Tyrosine--tRNA ligase (424 aa).

An L-tyrosine-binding site is contributed by Tyr37. The 'HIGH' region signature appears at 42–51 (PTADSLHLGH). Lys144 carries the N6-acetyllysine modification. L-tyrosine is bound by residues Tyr175 and Gln179. Residues 235 to 239 (KFGKT) carry the 'KMSKS' region motif. Lys238 is a binding site for ATP. Residues 357–414 (ADLMQALVDSELQPSRGQARKTIASNAITINGEKQSDPEYFFKEEDRLFGRFTLLRRG) form the S4 RNA-binding domain.

It belongs to the class-I aminoacyl-tRNA synthetase family. TyrS type 1 subfamily. As to quaternary structure, homodimer.

Its subcellular location is the cytoplasm. The enzyme catalyses tRNA(Tyr) + L-tyrosine + ATP = L-tyrosyl-tRNA(Tyr) + AMP + diphosphate + H(+). Its function is as follows. Catalyzes the attachment of tyrosine to tRNA(Tyr) in a two-step reaction: tyrosine is first activated by ATP to form Tyr-AMP and then transferred to the acceptor end of tRNA(Tyr). The protein is Tyrosine--tRNA ligase of Shigella dysenteriae serotype 1 (strain Sd197).